We begin with the raw amino-acid sequence, 295 residues long: MHKLLLIITVFFTFNVAQASLTSIVASVNDKPITLNEFHARKKMIMALNNIENLTADQDKQLNDLAINSLIDESLLFQYAGDREIPQDEIDNAIKSIEDRNKMAHGSLLQYLKNKSVNPESFILQIKSELIKMNILSSLSRSVQVSNKEIDVAILSSDQKDVEILMQVFRSKDGSNKAFTKMNHLKNRLKKCSDVKRTLYDKFATMQIITSKLSNIEGVKQTIVKDLIPDKASNVFEVNNKFEIILVCSKKILNVNADENNYVVNFLTNKKISQKAQKIFKNMRKKAAIRIMFPS.

Residues 1–19 (MHKLLLIITVFFTFNVAQA) form the signal peptide.

This is an uncharacterized protein from Rickettsia prowazekii (strain Madrid E).